The chain runs to 778 residues: Protection of telomeres protein 1 (778 aa).

Belongs to the telombin family. In terms of assembly, homodimer or homooligomer. Component of the telomerase ribonucleoprotein complex. Binds single-stranded telomeric DNA as a monomer. Found in a complex with TERF1, TINF2 and TNKS1. Interacts with TNKS1.

The protein resides in the nucleus. It is found in the chromosome. It localises to the telomere. Component of the telomerase ribonucleoprotein (RNP) complex that is essential for the replication of chromosome termini. Is a component of the double-stranded telomeric DNA-binding TRF1 complex that is involved in the regulation of telomere length by cis-inhibition of telomerase. Also acts as a single-stranded telomeric DNA-binding protein and thus may act as a downstream effector of the TRF1 complex and may transduce information about telomere maintenance and/or length to the telomere terminus. Binds to at least two telomeric single-stranded 5'-TTAGGG-3' repeats (G-strand). Its activity is TERT dependent but it does not increase TERT activity. The protein is Protection of telomeres protein 1 (POT1) of Gallus gallus (Chicken).